Here is a 629-residue protein sequence, read N- to C-terminus: Dapper homolog 3 (629 aa).

A Phosphoserine modification is found at S6. 2 disordered regions span residues 50–76 and 105–574; these read PGMGGAEAEDEEDADEDEDAAAARRAA and GGLE…GGLV. A compositionally biased stretch (acidic residues) spans 56–69; it reads EAEDEEDADEDEDA. The stretch at 63–87 forms a coiled coil; sequence ADEDEDAAAARRAAAALEEQLEALP. A compositionally biased stretch (low complexity) spans 105–150; that stretch reads GGLEQESGRSSGFYEDPSSTGGPDSPPSTFCGDSGFSGSSSYGRLG. 2 positions are modified to phosphoserine: S165 and S239. R258 carries the post-translational modification Omega-N-methylarginine. Residues 301–311 are compositionally biased toward basic and acidic residues; the sequence is PAREPSLERVG. Positions 316–335 are enriched in low complexity; that stretch reads SPAALSRAWASSWESEAAPE. A compositionally biased stretch (pro residues) spans 336 to 348; the sequence is PAAPPAAPSPPDS. A phosphoserine mark is found at S426 and S478. A compositionally biased stretch (low complexity) spans 525–535; that stretch reads SAGRLGPLGRR. The span at 536 to 546 shows a compositional bias: gly residues; sequence GPAGGVGGGYG. Residues 547-568 show a composition bias toward low complexity; that stretch reads ESESSASEGESPAFSSASSDSD. Residues 626–629 carry the PDZ-binding motif; the sequence is MTTV.

The protein belongs to the dapper family. In terms of assembly, can form homodimers and heterodimers with DACT1 or DACT3. Interacts with CSNK1D, PKA catalytic subunit, PKC-type kinase, DVL1, DVL3, VANGL1, VANGL2 and CTNND1. Interacts with DVL2.

Its function is as follows. May be involved in regulation of intracellular signaling pathways during development. Specifically thought to play a role in canonical and/or non-canonical Wnt signaling pathways through interaction with DSH (Dishevelled) family proteins. The sequence is that of Dapper homolog 3 (DACT3) from Homo sapiens (Human).